Consider the following 158-residue polypeptide: Regulator of G-protein signaling 13 (158 aa).

The 117-residue stretch at 34–150 (SLESLMATKY…LKSEMYQQLL (117 aa)) folds into the RGS domain.

In terms of biological role, inhibits signal transduction by increasing the GTPase activity of G protein alpha subunits thereby driving them into their inactive GDP-bound form. Binds to both G(i)-alpha and G(q)-alpha. This chain is Regulator of G-protein signaling 13 (Rgs13), found in Mus musculus (Mouse).